Here is a 404-residue protein sequence, read N- to C-terminus: Deoxyguanosinetriphosphate triphosphohydrolase-like protein (404 aa).

The disordered stretch occupies residues 1-33; sequence MSVGMAAPRAAYGCDPDRSRGRQFAEPPSNNRS. The region spanning 69-217 is the HD domain; the sequence is RLTHSLEVAQ…AAIADDIAYD (149 aa).

This sequence belongs to the dGTPase family. Type 2 subfamily.

The polypeptide is Deoxyguanosinetriphosphate triphosphohydrolase-like protein (Rhodopseudomonas palustris (strain BisB5)).